The primary structure comprises 426 residues: Bile acid CoA-transferase BaiF (426 aa).

D168 functions as the Nucleophile in the catalytic mechanism.

The protein belongs to the CoA-transferase III family.

It catalyses the reaction lithocholoyl-CoA + cholate = choloyl-CoA + lithocholate. It carries out the reaction deoxycholoyl-CoA + cholate = choloyl-CoA + deoxycholate. The enzyme catalyses allodeoxycholoyl-CoA + cholate = allodeoxycholate + choloyl-CoA. The catalysed reaction is allocholate + deoxycholoyl-CoA = allocholoyl-CoA + deoxycholate. It catalyses the reaction allocholate + lithocholoyl-CoA = allocholoyl-CoA + lithocholate. It carries out the reaction allocholate + allodeoxycholoyl-CoA = allocholoyl-CoA + allodeoxycholate. The enzyme catalyses lithocholoyl-CoA + chenodeoxycholate = chenodeoxycholoyl-CoA + lithocholate. The catalysed reaction is ursodeoxycholate + deoxycholoyl-CoA = ursodeoxycholoyl-CoA + deoxycholate. It catalyses the reaction ursodeoxycholate + lithocholoyl-CoA = ursodeoxycholoyl-CoA + lithocholate. It carries out the reaction allodeoxycholoyl-CoA + ursodeoxycholate = ursodeoxycholoyl-CoA + allodeoxycholate. The enzyme catalyses beta-muricholate + lithocholoyl-CoA = beta-muricholoyl-CoA + lithocholate. The catalysed reaction is beta-muricholate + deoxycholoyl-CoA = beta-muricholoyl-CoA + deoxycholate. It catalyses the reaction beta-muricholate + allodeoxycholoyl-CoA = beta-muricholoyl-CoA + allodeoxycholate. It carries out the reaction choloyl-CoA + H2O = cholate + CoA + H(+). The enzyme catalyses chenodeoxycholoyl-CoA + H2O = chenodeoxycholate + CoA + H(+). Its pathway is lipid metabolism; bile acid biosynthesis. Functionally, functions in the bile acid 7alpha-dehydroxylation pathway, which forms secondary bile acids via the 7alpha-dehydroxylation of primary bile acids, and is carried out by intestinal anaerobic bacteria. Acts as a bile acid CoA transferase with broad bile acid substrate specificity. Catalyzes the transfer of the CoA moiety of secondary bile acid-CoA compounds to primary bile acids. Can use lithocholoyl-CoA, deoxycholoyl-CoA and allodeoxycholoyl-CoA as bile acid CoA donors and cholate, allocholate, chenodeoxycholate, ursodeoxycholate, and beta-muricholate as bile acid CoA acceptors. Also displays CoA hydrolase activity, being able to catalyze the hydrolysis of choloyl-CoA, 3-dehydrocholoyl-CoA, and chenodeoxycholoyl-CoA, releasing CoA and the corresponding free bile acid. However, this latter activity may not represent the actual activity of this enzyme, since using a transferase rather than hydrolase, the bacteria conserve the thioester bond energy, saving ATP molecules. Shows no hydrolytic activity with acetyl-CoA, isovaleryl-CoA, palmitoyl-CoA, or phenylacetyl-CoA as substrates. The protein is Bile acid CoA-transferase BaiF of Clostridium scindens (strain JCM 10418 / VPI 12708).